An 84-amino-acid chain; its full sequence is Delta-stichotoxin-Sgt3a (84 aa).

The N-terminal stretch at 1–19 (MAYLKIVLVALMLVVAVSA) is a signal peptide. A propeptide spanning residues 20 to 33 (MRLSDQEDQDISVA) is cleaved from the precursor. 3 cysteine pairs are disulfide-bonded: Cys38-Cys78, Cys40-Cys68, and Cys61-Cys79. Gly84 is a propeptide.

This sequence belongs to the sea anemone sodium channel inhibitory toxin family. Type II subfamily.

The protein resides in the secreted. The protein localises to the nematocyst. In terms of biological role, binds specifically to voltage-gated sodium channels (Nav), thereby delaying their inactivation during signal transduction. The sequence is that of Delta-stichotoxin-Sgt3a from Stichodactyla gigantea (Giant carpet anemone).